A 707-amino-acid polypeptide reads, in one-letter code: Choline transporter-like protein 4 (707 aa).

At 1 to 32 the chain is on the cytoplasmic side; sequence MGRKQNENEAHGNSAKYDPSFRGPIKNRGCTD. Residues 33–53 form a helical membrane-spanning segment; it reads IICCVLFLIFILGYIIVGLVA. The Extracellular portion of the chain corresponds to 54 to 227; the sequence is WVYGDPRQVL…KIFEDFAQSW (174 aa). 4 N-linked (GlcNAc...) asparagine glycosylation sites follow: Asn67, Asn185, Asn195, and Asn196. The chain crosses the membrane as a helical span at residues 228-248; it reads YWILVALGVALALSLLFILLL. Topologically, residues 249–250 are cytoplasmic; sequence RL. The chain crosses the membrane as a helical span at residues 251–271; sequence VAAPLVLLLIVGVLAVLAYGI. The Extracellular portion of the chain corresponds to 272 to 307; the sequence is YHCWQQYQVFRDKGASITQLGFTTNFSAYQSVKETW. Asn296 is a glycosylation site (N-linked (GlcNAc...) asparagine). The helical transmembrane segment at 308–328 threads the bilayer; that stretch reads LAALIVLAVLEGILLLMLIFL. The Cytoplasmic portion of the chain corresponds to 329 to 356; it reads RQRIRIAIALLKEASRAVGQMMSTMFYP. A helical transmembrane segment spans residues 357 to 377; that stretch reads LVTFVLLVICIGYWAVTALYL. The Extracellular segment spans residues 378–452; that stretch reads ATSGQPQYIY…GVLGLFWTVN (75 aa). 3 N-linked (GlcNAc...) asparagine glycosylation sites follow: Asn391, Asn403, and Asn413. Residues 453–473 form a helical membrane-spanning segment; it reads WVLALGQCVLAGAFASFYWAF. The Cytoplasmic portion of the chain corresponds to 474–498; sequence HKPRDIPTFPLSSAFIRTLRYHTGS. The chain crosses the membrane as a helical span at residues 499 to 519; sequence LAFGALILSLVQIARVILEYI. At 520-557 the chain is on the extracellular side; the sequence is DHKLRGSQNPVARCIICCFKCCLWCLEKFIKFLNRNAY. Residues 558–578 traverse the membrane as a helical segment; sequence IMIAIYGKNFCVSAKNAFMLL. Over 579 to 594 the chain is Cytoplasmic; the sequence is MRNVLRVVVLDKVTDL. A helical transmembrane segment spans residues 595–615; it reads LLFFGKLLVVGGVGVLSFFFF. Residues 616 to 635 are Extracellular-facing; sequence SGRIKGLGKDFENPNLNYYW. The chain crosses the membrane as a helical span at residues 636–656; the sequence is LPIMTSIMGAYVIASGFFSVF. Residues 657–707 lie on the Cytoplasmic side of the membrane; the sequence is GMCVDTLFLCFLEDLERNDGSQERPYYMPKALLKILGKKNEAPTGGKTRKK.

It belongs to the CTL (choline transporter-like) family. In terms of processing, N-glycosylated; N-glycosylation of Asn-67 and Asn-391 is required for a proper thiamine pyrophosphate uptake. In terms of tissue distribution, expressed in colon and cecum.

Its subcellular location is the membrane. It localises to the apical cell membrane. The enzyme catalyses choline(out) + n H(+)(in) = choline(in) + n H(+)(out). The catalysed reaction is thiamine diphosphate(out) = thiamine diphosphate(in). In terms of biological role, choline transporter that plays a role in the choline-acetylcholine system and is required to the efferent innervation of hair cells in the olivocochlear bundle for the maintenance of physiological function of outer hair cells and the protection of hair cells from acoustic injury. Also described as a thiamine pyrophosphate transporter in colon, may mediate the absorption of microbiota-generated thiamine pyrophosphate and contribute to host thiamine (vitamin B1) homeostasis. This is Choline transporter-like protein 4 from Mus musculus (Mouse).